The following is a 437-amino-acid chain: Immunoglobulin superfamily member 11 (437 aa).

An N-terminal signal peptide occupies residues 1 to 22; that stretch reads MTCRGSPLAPLLLFSLHGVAAS. The Ig-like V-type domain maps to 23 to 136; it reads LEVSESPGSV…DRGGRNIGVT (114 aa). At 23–241 the chain is on the extracellular side; sequence LEVSESPGSV…VISPQPRSIG (219 aa). Disulfide bonds link Cys44/Cys120 and Cys165/Cys215. The N-linked (GlcNAc...) asparagine glycan is linked to Asn102. Residues 144–234 enclose the Ig-like C2-type domain; it reads PSAPHCQIQG…TCLLDLQVIS (91 aa). A helical transmembrane segment spans residues 242 to 262; the sequence is LIAGAIGTGAVIIIFCIALIL. The Cytoplasmic portion of the chain corresponds to 263 to 437; it reads GAFFYWRSKN…PAQSRAGSLV (175 aa). Arg379 is modified (omega-N-methylarginine). A disordered region spans residues 382–405; it reads SLPAVSRSNGSVSRKARPPPVPSL.

N-glycosylated.

The protein localises to the cell membrane. Its function is as follows. Functions as a cell adhesion molecule through homophilic interaction. Stimulates cell growth. The polypeptide is Immunoglobulin superfamily member 11 (IGSF11) (Bos taurus (Bovine)).